Consider the following 692-residue polypeptide: Elongation factor G (692 aa).

Residues 9 to 284 form the tr-type G domain; the sequence is HKVRNIGIAA…AVVDYLPAPD (276 aa). Residues 18–25, 82–86, and 136–139 each bind GTP; these read AHIDAGKT, DTPGH, and NKMD.

Belongs to the TRAFAC class translation factor GTPase superfamily. Classic translation factor GTPase family. EF-G/EF-2 subfamily.

It is found in the cytoplasm. Catalyzes the GTP-dependent ribosomal translocation step during translation elongation. During this step, the ribosome changes from the pre-translocational (PRE) to the post-translocational (POST) state as the newly formed A-site-bound peptidyl-tRNA and P-site-bound deacylated tRNA move to the P and E sites, respectively. Catalyzes the coordinated movement of the two tRNA molecules, the mRNA and conformational changes in the ribosome. This chain is Elongation factor G, found in Campylobacter concisus (strain 13826).